Reading from the N-terminus, the 199-residue chain is Holliday junction branch migration complex subunit RuvA (199 aa).

The tract at residues 1–64 (MIALLTGRLA…EDSISLFGFR (64 aa)) is domain I. Residues 65–143 (TLAEKEFFQL…KMDVAPSAQE (79 aa)) form a domain II region. The flexible linker stretch occupies residues 144 to 154 (APSSEAPAEVA). Positions 154–199 (ADDVASALVNLGYKEAVVRKVLAEMSIEPDASTEAVLRQALKVLMK) are domain III.

It belongs to the RuvA family. As to quaternary structure, homotetramer. Forms an RuvA(8)-RuvB(12)-Holliday junction (HJ) complex. HJ DNA is sandwiched between 2 RuvA tetramers; dsDNA enters through RuvA and exits via RuvB. An RuvB hexamer assembles on each DNA strand where it exits the tetramer. Each RuvB hexamer is contacted by two RuvA subunits (via domain III) on 2 adjacent RuvB subunits; this complex drives branch migration. In the full resolvosome a probable DNA-RuvA(4)-RuvB(12)-RuvC(2) complex forms which resolves the HJ.

The protein resides in the cytoplasm. In terms of biological role, the RuvA-RuvB-RuvC complex processes Holliday junction (HJ) DNA during genetic recombination and DNA repair, while the RuvA-RuvB complex plays an important role in the rescue of blocked DNA replication forks via replication fork reversal (RFR). RuvA specifically binds to HJ cruciform DNA, conferring on it an open structure. The RuvB hexamer acts as an ATP-dependent pump, pulling dsDNA into and through the RuvAB complex. HJ branch migration allows RuvC to scan DNA until it finds its consensus sequence, where it cleaves and resolves the cruciform DNA. This Geobacter sulfurreducens (strain ATCC 51573 / DSM 12127 / PCA) protein is Holliday junction branch migration complex subunit RuvA.